We begin with the raw amino-acid sequence, 469 residues long: Diacetylchitobiose binding protein NgcE (469 aa).

A signal peptide (tat-type signal) is located at residues 1–37 (MTIRAGSLDRRTLLRGAIATAAMGSFAVACSSPSSED). Positions 30-54 (CSSPSSEDKESDSGPKGEKSANNPF) are disordered. The span at 35–48 (SEDKESDSGPKGEK) shows a compositional bias: basic and acidic residues.

Belongs to the bacterial solute-binding protein 1 family. As to quaternary structure, the complex is composed of two ATP-binding proteins (MsiK), two transmembrane proteins (NgcF and NgcG) and a solute-binding protein (NgcE). In terms of processing, predicted to be exported by the Tat system. The position of the signal peptide cleavage has not been experimentally proven.

The protein localises to the cell membrane. Functionally, part of the ABC transporter complex NgcEFG-MsiK involved in N,N'-diacetylchitobiose ((GlcNAc)2) uptake. Binds (GlcNAc)2. Can also bind GlcNAc. The sequence is that of Diacetylchitobiose binding protein NgcE from Streptomyces coelicolor (strain ATCC BAA-471 / A3(2) / M145).